The chain runs to 353 residues: MYGPFLLKEFLNDVPLKPMHNTRMMAEAKFDFEEKKTQKSAATIENHSNRSCRDWLADMGMVFSKSQLCTKFDNRFRDAKAAQTIVCFQHSVLCRFAPYMRYIEKKLNEVLPATFYIHSGKGLEELNKWVIESKFEGVCTESDYEAFDASQDQYIVAFELALMRYLGLPNDLIEDYKYIKTHLGSKLGNFAIMRFSGEASTFLFNTMANMLFTFLRYKLKGDERICFAGDDMCANRALFIKDTHEGFLKKLKLKAKVDRTNRPSFCGWSLSSDGIYKKPQLVFERLCIAKETANLANCIDNYAIEVSYAYKLGERIKERMSEEELEAFYNCVRVIIKHKHLLKSEIRSVYEEV.

The region spanning 137–244 (GVCTESDYEA…NRALFIKDTH (108 aa)) is the RdRp catalytic domain.

It belongs to the potexviruses/carlaviruses RNA replication protein family.

The catalysed reaction is RNA(n) + a ribonucleoside 5'-triphosphate = RNA(n+1) + diphosphate. It carries out the reaction ATP + H2O = ADP + phosphate + H(+). Functionally, RNA replication. The central part of this protein possibly functions as an ATP-binding helicase. In Potato virus S (strain Peruvian), this protein is RNA replication protein.